A 291-amino-acid chain; its full sequence is Small ribosomal subunit protein uS2 (291 aa).

Positions N270–N291 are disordered.

It belongs to the universal ribosomal protein uS2 family.

The chain is Small ribosomal subunit protein uS2 from Rickettsia bellii (strain OSU 85-389).